We begin with the raw amino-acid sequence, 365 residues long: RISC-loading complex subunit TARBP2 (365 aa).

3 sufficient for interaction with PRKRA regions span residues 22–105, 151–233, and 286–365; these read MLAA…EPAL, SPQQ…DARD, and LGAL…AGSK. One can recognise a DRBM 1 domain in the interval 30 to 97; sequence TPISLLQEYG…AEVALKHLKG (68 aa). Ser151 is modified (phosphoserine). 2 consecutive DRBM domains span residues 158–226 and 292–360; these read NPVG…RVHT and ACCS…YLRI. The segment at 227-365 is sufficient for interaction with DICER1; sequence VPLDARDGNE…QYLRIMAGSK (139 aa).

This sequence belongs to the TARBP2 family. As to quaternary structure, self-associates. Component of the RISC loading complex (RLC), or micro-RNA (miRNA) loading complex (miRLC), which is composed of DICER1, AGO2 and TARBP2. Note that the trimeric RLC/miRLC is also referred to as RISC. Interacts with EIF2AK2/PKR and inhibits its protein kinase activity. Interacts with DHX9. Interacts with DICER1 and PRKRA. Interacts with DICER1, AGO2, MOV10, EIF6 and RPL7A (60S ribosome subunit); they form a large RNA-induced silencing complex (RISC). Interacts with IRF7; this interaction prevents IRF7 phosphorylation and activation.

The protein resides in the cytoplasm. The protein localises to the perinuclear region. It localises to the nucleus. In terms of biological role, required for formation of the RNA induced silencing complex (RISC). Component of the RISC loading complex (RLC), also known as the micro-RNA (miRNA) loading complex (miRLC), which is composed of DICER1, AGO2 and TARBP2. Within the RLC/miRLC, DICER1 and TARBP2 are required to process precursor miRNAs (pre-miRNAs) to mature miRNAs and then load them onto AGO2. AGO2 bound to the mature miRNA constitutes the minimal RISC and may subsequently dissociate from DICER1 and TARBP2. May also play a role in the production of short interfering RNAs (siRNAs) from double-stranded RNA (dsRNA) by DICER1. Binds in vitro to the PRM1 3'-UTR. Seems to act as a repressor of translation. For some pre-miRNA substrates, may also alter the choice of cleavage site by DICER1. Negatively regulates IRF7-mediated IFN-beta signaling triggered by viral infection by inhibiting the phosphorylation of IRF7 and promoting its 'Lys'-48-linked ubiquitination and degradation. The sequence is that of RISC-loading complex subunit TARBP2 (Tarbp2) from Mus musculus (Mouse).